The sequence spans 72 residues: Small ribosomal subunit protein bS20 (72 aa).

It belongs to the bacterial ribosomal protein bS20 family.

Binds directly to 16S ribosomal RNA. In Aeromonas salmonicida, this protein is Small ribosomal subunit protein bS20 (rpsT).